Reading from the N-terminus, the 377-residue chain is Tryptophan 2,3-dioxygenase (377 aa).

Substrate-binding positions include 57–61 (FIITH) and R128. Heme is bound at residue H313. Residue T328 participates in substrate binding.

Belongs to the tryptophan 2,3-dioxygenase family. As to quaternary structure, homotetramer. Dimer of dimers. It depends on heme as a cofactor.

The catalysed reaction is L-tryptophan + O2 = N-formyl-L-kynurenine. The protein operates within amino-acid degradation; L-tryptophan degradation via kynurenine pathway; L-kynurenine from L-tryptophan: step 1/2. It functions in the pathway pigment biosynthesis; ommochrome biosynthesis. In terms of biological role, heme-dependent dioxygenase that catalyzes the oxidative cleavage of the L-tryptophan (L-Trp) pyrrole ring and converts L-tryptophan to N-formyl-L-kynurenine. Catalyzes the oxidative cleavage of the indole moiety. The protein is Tryptophan 2,3-dioxygenase of Drosophila grimshawi (Hawaiian fruit fly).